The primary structure comprises 254 residues: Phytolongin Phyl1.1 (254 aa).

Residues 12-113 (CVSRDNQILY…TAMIGSINVE (102 aa)) enclose the Longin domain. Residues 138–173 (ELKSSNLGEQSEGSNSTKAPLLGRLSKQEKKKGKDH) are disordered. A compositionally biased stretch (polar residues) spans 145-155 (GEQSEGSNSTK). A helical; Anchor for type IV membrane protein transmembrane segment spans residues 226 to 246 (IVLAIDAAICLTLFGIWLAIC).

Belongs to the synaptobrevin family.

The protein localises to the membrane. In terms of biological role, non-SNARE longin protein involved in membrane-trafficking machinery. The protein is Phytolongin Phyl1.1 of Arabidopsis thaliana (Mouse-ear cress).